Consider the following 249-residue polypeptide: 5'-nucleotidase SurE (249 aa).

A divalent metal cation is bound by residues Asp8, Asp9, Ser39, and Asn91.

It belongs to the SurE nucleotidase family. A divalent metal cation serves as cofactor.

It is found in the cytoplasm. It carries out the reaction a ribonucleoside 5'-phosphate + H2O = a ribonucleoside + phosphate. In terms of biological role, nucleotidase that shows phosphatase activity on nucleoside 5'-monophosphates. The sequence is that of 5'-nucleotidase SurE from Pseudomonas entomophila (strain L48).